A 172-amino-acid polypeptide reads, in one-letter code: uncharacterized protein (172 aa).

The next 4 helical transmembrane spans lie at 46–66 (MFSI…FLYP), 76–96 (LLSL…VGLF), 104–124 (WKFL…LGWS), and 129–149 (FFYA…FTEI).

It is found in the endoplasmic reticulum membrane. This is an uncharacterized protein from Schizosaccharomyces pombe (strain 972 / ATCC 24843) (Fission yeast).